The following is a 147-amino-acid chain: Large ribosomal subunit protein uL13 (147 aa).

This sequence belongs to the universal ribosomal protein uL13 family. In terms of assembly, part of the 50S ribosomal subunit.

Its function is as follows. This protein is one of the early assembly proteins of the 50S ribosomal subunit, although it is not seen to bind rRNA by itself. It is important during the early stages of 50S assembly. This Mycolicibacterium gilvum (strain PYR-GCK) (Mycobacterium gilvum (strain PYR-GCK)) protein is Large ribosomal subunit protein uL13.